Consider the following 250-residue polypeptide: Isoprenyl transferase (250 aa).

The active site involves aspartate 27. Position 27 (aspartate 27) interacts with Mg(2+). Substrate is bound by residues 28-31 (GNRR), tryptophan 32, histidine 48, and 76-78 (STE). Asparagine 79 serves as the catalytic Proton acceptor. Residues phenylalanine 80, arginine 82, arginine 199, and 205–207 (RVS) each bind substrate. Position 218 (glutamate 218) interacts with Mg(2+).

It belongs to the UPP synthase family. In terms of assembly, homodimer. It depends on Mg(2+) as a cofactor.

Functionally, catalyzes the condensation of isopentenyl diphosphate (IPP) with allylic pyrophosphates generating different type of terpenoids. This Chlamydia abortus (strain DSM 27085 / S26/3) (Chlamydophila abortus) protein is Isoprenyl transferase.